The primary structure comprises 301 residues: Methionyl-tRNA formyltransferase (301 aa).

Position 109-112 (109-112 (SLLP)) interacts with (6S)-5,6,7,8-tetrahydrofolate.

It belongs to the Fmt family.

The enzyme catalyses L-methionyl-tRNA(fMet) + (6R)-10-formyltetrahydrofolate = N-formyl-L-methionyl-tRNA(fMet) + (6S)-5,6,7,8-tetrahydrofolate + H(+). Functionally, attaches a formyl group to the free amino group of methionyl-tRNA(fMet). The formyl group appears to play a dual role in the initiator identity of N-formylmethionyl-tRNA by promoting its recognition by IF2 and preventing the misappropriation of this tRNA by the elongation apparatus. The protein is Methionyl-tRNA formyltransferase of Ruegeria pomeroyi (strain ATCC 700808 / DSM 15171 / DSS-3) (Silicibacter pomeroyi).